Reading from the N-terminus, the 342-residue chain is Pre-mRNA-splicing factor 18 (342 aa).

Methionine 1 is modified (N-acetylmethionine).

It belongs to the PRP18 family. In terms of assembly, heterodimer with PPIH. Interacts with PRPF4 and with the spliceosome. Part of a complex containing U4/U6 snRNPs.

It is found in the nucleus speckle. Participates in the second step of pre-mRNA splicing. The sequence is that of Pre-mRNA-splicing factor 18 (PRPF18) from Pongo abelii (Sumatran orangutan).